An 856-amino-acid polypeptide reads, in one-letter code: MSEARRDSTSSLQRKKPPWLKLDIPAVVPPAAEEPSFLQPLRRQAFLRSVSMPAETARVPSPHHEPRRLALQRQTSITQTIRRGTADWFGVSKDSDSTQKWQRKSIRHCSQRYGKLKPQVIRELDLPSQDNVSLTSTETPPPLYVGPCQLGMQKIIDPLARGRAFRMADDTADGLSAPHTPVTPGAASLCSFSSSRSGFNRLPRRRKRESVAKMSFRAAAALVKGRSIRDGTLRRGQRRSFTPASFLEEDMVDFPDELDTSFFAREGVLHEELSTYPDEVFESPSEAALKDWEKAPDQADLTGGALDRSELERSHLMLPLERGWRKQKEGGTLAPQPKVRLRQEVVSAAGPRRGQRIAVPVRKLFAREKRPYGLGMVGRLTNRTYRKRIDSYVKRQIEDMDDHRPFFTYWLTFVHSLVTILAVCIYGIAPVGFSQHETVDSVLRKRGVYENVKYVQQENFWIGPSSEALIHLGAKFSPCMRQDPQVHNFILAAREREKHSACCVRNDRSGCVQTSKEECSSTLAVWVKWPVHPSAPDLAGNKRQFGSVCHQDPRVCDEPSSEDPHEWPEDITKWPICTKNSAGNHTNHPHMDCVITGRPCCIGTKGRCEITSREYCDFMKGYFHEEATLCSQVHCMDDVCGLLPFLNPEVPDQFYRLWLSLFLHAGILHCLVSVCFQMTVLRDLEKLAGWHRIAIIYLLSGVTGNLASAIFLPYRAEVGPAGSQFGILACLFVELFQSWQILARPWRAFFKLLAVVLFLFAFGLLPWIDNFAHISGFVSGLFLSFAFLPYISFGKFDLYRKRCQIIIFQAVFLGLLAGLVVLFYFYPVRCEWCEFLTCIPFTDKFCEKYELDAQLH.

The segment at 1–20 (MSEARRDSTSSLQRKKPPWL) is disordered. The Cytoplasmic portion of the chain corresponds to 1 to 412 (MSEARRDSTS…HRPFFTYWLT (412 aa)). A phosphoserine mark is found at Ser-76 and Ser-176. Residues Thr-180 and Thr-183 each carry the phosphothreonine modification. Ser-391 is subject to Phosphoserine. The helical transmembrane segment at 413–433 (FVHSLVTILAVCIYGIAPVGF) threads the bilayer. The Lumenal segment spans residues 434–656 (SQHETVDSVL…NPEVPDQFYR (223 aa)). N-linked (GlcNAc...) asparagine glycosylation is present at Asn-584. Residues 657 to 677 (LWLSLFLHAGILHCLVSVCFQ) traverse the membrane as a helical segment. The Cytoplasmic segment spans residues 678–692 (MTVLRDLEKLAGWHR). A helical membrane pass occupies residues 693 to 713 (IAIIYLLSGVTGNLASAIFLP). At 714–715 (YR) the chain is on the lumenal side. A helical membrane pass occupies residues 716 to 736 (AEVGPAGSQFGILACLFVELF). Residues 737 to 747 (QSWQILARPWR) are Cytoplasmic-facing. The helical transmembrane segment at 748-768 (AFFKLLAVVLFLFAFGLLPWI) threads the bilayer. The Lumenal portion of the chain corresponds to 769–773 (DNFAH). The helical transmembrane segment at 774 to 794 (ISGFVSGLFLSFAFLPYISFG) threads the bilayer. Residues 795-804 (KFDLYRKRCQ) are Cytoplasmic-facing. The helical transmembrane segment at 805–825 (IIIFQAVFLGLLAGLVVLFYF) threads the bilayer. Residues 826–856 (YPVRCEWCEFLTCIPFTDKFCEKYELDAQLH) are Lumenal-facing.

This sequence belongs to the peptidase S54 family. In terms of assembly, homodimer, or homooligomer. Interacts with TGFA and HBEGF. Interacts with EGF; may retain EGF in the endoplasmic reticulum and regulates its degradation through the endoplasmic reticulum-associated degradation (ERAD). Interacts (via cytoplasmic N-terminus) with FRMD8/iTAP; this interaction leads to mutual protein stabilization. Interacts with ADAM17/TACE.

Its subcellular location is the endoplasmic reticulum membrane. It is found in the golgi apparatus membrane. Its function is as follows. Regulates ADAM17 protease, a sheddase of the epidermal growth factor (EGF) receptor ligands and TNF, thereby plays a role in sleep, cell survival, proliferation, migration and inflammation. Does not exhibit any protease activity on its own. In Rattus norvegicus (Rat), this protein is Inactive rhomboid protein 1 (Rhbdf1).